Consider the following 365-residue polypeptide: Magnesium-chelatase subunit ChlI homolog (365 aa).

Glutamate 40 to threonine 47 serves as a coordination point for ATP. Residues phenylalanine 340–lysine 365 form a disordered region. Basic and acidic residues predominate over residues asparagine 344–lysine 365.

Belongs to the Mg-chelatase subunits D/I family.

This Methanocaldococcus jannaschii (strain ATCC 43067 / DSM 2661 / JAL-1 / JCM 10045 / NBRC 100440) (Methanococcus jannaschii) protein is Magnesium-chelatase subunit ChlI homolog.